The following is a 78-amino-acid chain: RNA-binding protein Hfq (78 aa).

The region spanning 10–69 (DPFLNALRKEHVPVSIYLVNGIKLQGHIESFDQYVVLLRNTVTQMVYKHAISTVVPARAV) is the Sm domain.

This sequence belongs to the Hfq family. In terms of assembly, homohexamer.

Its function is as follows. RNA chaperone that binds small regulatory RNA (sRNAs) and mRNAs to facilitate mRNA translational regulation in response to envelope stress, environmental stress and changes in metabolite concentrations. Also binds with high specificity to tRNAs. The polypeptide is RNA-binding protein Hfq (Herminiimonas arsenicoxydans).